We begin with the raw amino-acid sequence, 540 residues long: L-aspartate oxidase (540 aa).

FAD contacts are provided by residues 16-19 (SGAA), Lys38, 45-52 (STFYAQGG), 161-162 (NA), and Asp223. Residues His244 and 259-260 (TE) each bind succinate. The active-site Proton donor/acceptor is Arg290. FAD is bound at residue Glu375. Ser389 serves as a coordination point for succinate. FAD is bound at residue 391–392 (SL).

This sequence belongs to the FAD-dependent oxidoreductase 2 family. NadB subfamily. In terms of assembly, monomer. Homodimer. Both the monomeric and dimeric forms of the enzyme are catalytically active. It depends on FAD as a cofactor.

It is found in the cytoplasm. It catalyses the reaction L-aspartate + O2 = iminosuccinate + H2O2. It carries out the reaction fumarate + L-aspartate = iminosuccinate + succinate. Its pathway is cofactor biosynthesis; NAD(+) biosynthesis; iminoaspartate from L-aspartate (oxidase route): step 1/1. Inhibited by the product iminoaspartate. Competitively inhibited by mesotartrate. NAD acts as a competitive inhibitor to FAD. Inhibited by iodoacetic acid, diethylpyrocarbonate and tetranitromethane. Catalyzes the oxidation of L-aspartate to iminoaspartate, the first step in the de novo biosynthesis of NAD(+). Can use either oxygen or fumarate as electron acceptors, which allows the enzyme to be functional under aerobic and anaerobic conditions. In vivo, fumarate is used under anaerobic conditions, and oxygen is the predominant electron acceptor under aerobic conditions due to the lower fumarate levels. In vitro, fumarate is a more efficient electron acceptor and is kinetically superior to oxygen. The protein is L-aspartate oxidase of Escherichia coli (strain K12).